A 2678-amino-acid polypeptide reads, in one-letter code: Mediator of RNA polymerase II transcription subunit 13 (2678 aa).

12 disordered regions span residues 1–52 (MMGT…GYNS), 140–285 (SKKP…QPIS), 495–524 (NSNN…QQQQ), 553–615 (QQQQ…NNNI), 852–993 (SPSS…QQQQ), 1070–1253 (TSHY…KPFL), 1278–1394 (LPHN…QDES), 1462–1502 (SPFS…NNHH), 1806–1838 (FSGS…SMDD), 2075–2105 (QNQN…QTQT), 2225–2307 (SSSS…QEQK), and 2656–2678 (KLTP…SNNT). Low complexity-rich tracts occupy residues 15–48 (SGSN…PTTS), 144–162 (INNS…TDSS), and 169–186 (NSPS…NSNN). Residues 187-206 (VTKDSPPNATNKMSTSPKSL) show a composition bias toward polar residues. Positions 207 to 276 (SPTISNNNNN…SPPTVASVTS (70 aa)) are enriched in low complexity. Composition is skewed to low complexity over residues 553–573 (QQQQ…DNNN) and 587–615 (SSSS…NNNI). A compositionally biased stretch (polar residues) spans 855–872 (SPLTQHPSSPHSPFNNVN). The segment covering 901-916 (KKRHGKSQKKGRSSKR) has biased composition (basic residues). The segment covering 922–950 (SNNNNNNNTTTTSTITATTTTTTPTAATT) has biased composition (low complexity). Composition is skewed to polar residues over residues 966–979 (NIQE…LTTV) and 1079–1090 (PTQNGSQKNNQR). The segment covering 1109–1150 (TTTTTTTTTTTPTPNPTTTTTQPQTQPQQQSQQQQQPQQTNP) has biased composition (low complexity). Polar residues predominate over residues 1151–1195 (ILPTNSNLITNQKPQQYQPPLQDPFQSIDSQQPKSIQSPTLTNQP). The span at 1201–1211 (PTLTNQPLQQY) shows a compositional bias: low complexity. Residues 1281–1306 (NTEQSPSNDDLSNPNHLHHGTPTSAI) show a composition bias toward polar residues. Over residues 1312-1321 (SSSSSGNNMI) the composition is skewed to low complexity. Gly residues predominate over residues 1322-1343 (GSGGIVGSGGGNTNVSGSGGGM). The segment covering 1359-1371 (PHHHHHHHHHHHP) has biased composition (basic residues). The segment covering 1475–1497 (TTTNNNNNHNNNNNNNHPNNHHQ) has biased composition (low complexity). Polar residues predominate over residues 1806–1819 (FSGSSGLNNSNDRN). A compositionally biased stretch (polar residues) spans 2658-2678 (TPNSKQSPSPINSPHLNSNNT).

It belongs to the Mediator complex subunit 13 family. In terms of assembly, component of the Mediator complex.

The protein resides in the nucleus. Component of the Mediator complex, a coactivator involved in the regulated transcription of nearly all RNA polymerase II-dependent genes. Mediator functions as a bridge to convey information from gene-specific regulatory proteins to the basal RNA polymerase II transcription machinery. Mediator is recruited to promoters by direct interactions with regulatory proteins and serves as a scaffold for the assembly of a functional preinitiation complex with RNA polymerase II and the general transcription factors. Required for the starvation-induced activation of the ACA (adenylyl cyclase) expression pathway at the growth/differentiation transition. The protein is Mediator of RNA polymerase II transcription subunit 13 (amiB) of Dictyostelium discoideum (Social amoeba).